The chain runs to 850 residues: Trimethylamine-N-oxide reductase (850 aa).

The segment at residues 1-39 (MKNKDSLHVSRRRFLAQLGGLTVAGMLGPSLLTPRSARA) is a signal peptide (tat-type signal). Ser-191 serves as a coordination point for Mo-bis(molybdopterin guanine dinucleotide).

The protein belongs to the prokaryotic molybdopterin-containing oxidoreductase family. Requires Mo-bis(molybdopterin guanine dinucleotide) as cofactor. Post-translationally, predicted to be exported by the Tat system. The position of the signal peptide cleavage has not been experimentally proven.

The protein localises to the periplasm. The catalysed reaction is trimethylamine + 2 Fe(III)-[cytochrome c] + H2O = trimethylamine N-oxide + 2 Fe(II)-[cytochrome c] + 3 H(+). Its function is as follows. Reduces trimethylamine-N-oxide (TMAO) into trimethylamine; an anaerobic reaction coupled to energy-yielding reactions. In Salmonella typhimurium (strain LT2 / SGSC1412 / ATCC 700720), this protein is Trimethylamine-N-oxide reductase (torA).